The primary structure comprises 414 residues: F-box protein At3g47030 (414 aa).

The interval M1–R24 is disordered. In terms of domain architecture, F-box spans I28–M77.

This is F-box protein At3g47030 from Arabidopsis thaliana (Mouse-ear cress).